We begin with the raw amino-acid sequence, 498 residues long: Histone-lysine N-methyltransferase SET5 (498 aa).

Residues 68-94 are disordered; it reads KPNDGCTSRSTSCPGGKKKKKSKTDTS. The 308-residue stretch at 108 to 415 folds into the SET domain; sequence AGIRGVYFDP…PDDELVISYI (308 aa).

Belongs to the class V-like SAM-binding methyltransferase superfamily. Histone-lysine methyltransferase family. SET5 subfamily.

The protein resides in the nucleus. It localises to the chromosome. It is found in the cytoplasm. It catalyses the reaction L-lysyl-[histone] + S-adenosyl-L-methionine = N(6)-methyl-L-lysyl-[histone] + S-adenosyl-L-homocysteine + H(+). Its function is as follows. Histone methyltransferase that monomethylates 'Lys-5', 'Lys-8' and 'Lys-12' of histone H4 (H4K5me1, H4K8me1 and H4K12me1, respectively), thereby controlling gene expression and remodeling chromatin structures. The chain is Histone-lysine N-methyltransferase SET5 (SET5) from Mycosarcoma maydis (Corn smut fungus).